The primary structure comprises 171 residues: Peptide deformylase 1 (171 aa).

Residues C99 and H141 each coordinate Fe cation. E142 is a catalytic residue.

The protein belongs to the polypeptide deformylase family. Fe(2+) is required as a cofactor.

The catalysed reaction is N-terminal N-formyl-L-methionyl-[peptide] + H2O = N-terminal L-methionyl-[peptide] + formate. Functionally, removes the formyl group from the N-terminal Met of newly synthesized proteins. Requires at least a dipeptide for an efficient rate of reaction. N-terminal L-methionine is a prerequisite for activity but the enzyme has broad specificity at other positions. This chain is Peptide deformylase 1, found in Xanthomonas axonopodis pv. citri (strain 306).